Consider the following 409-residue polypeptide: UPF0261 protein Spro_4740 (409 aa).

The protein belongs to the UPF0261 family.

This is UPF0261 protein Spro_4740 from Serratia proteamaculans (strain 568).